A 775-amino-acid polypeptide reads, in one-letter code: Tyrosine-protein phosphatase non-receptor type 12 (775 aa).

Met-1 carries the post-translational modification N-acetylmethionine. The residue at position 19 (Ser-19) is a Phosphoserine. The region spanning 28-293 (FARDFMRLRR…ELVHRAIAQL (266 aa)) is the Tyrosine-protein phosphatase domain. Residues Asp-199, 231 to 237 (CSAGCGR), and Gln-278 each bind substrate. Cys-231 serves as the catalytic Phosphocysteine intermediate. The tract at residues 322-341 (SSIDSEKQDSPPPKPPRTRS) is disordered. Ser-331, Ser-434, Ser-448, and Ser-467 each carry phosphoserine. Residues 344–437 (VEGDAKEEIL…KLERNLSFEI (94 aa)) form an interaction with TGFB1I1 region. The interval 462-775 (KIKSASSSVV…GPREPPSEWT (314 aa)) is disordered. A Phosphothreonine modification is found at Thr-519. Phosphoserine occurs at positions 550 and 567. Residues 558–573 (NHSQTLKTVSSTPNST) show a composition bias toward polar residues. Phosphothreonine is present on Thr-569. Ser-596 is subject to Phosphoserine. Phosphothreonine is present on Thr-598. Phosphoserine is present on residues Ser-603, Ser-606, Ser-608, and Ser-613. Residues 622-640 (TSISTASATVSPASSAESA) show a composition bias toward low complexity. At Ser-673 the chain carries Phosphoserine. Over residues 692–711 (VRPEWHELPNQEWSEQRESE) the composition is skewed to basic and acidic residues. A Phosphoserine modification is found at Ser-748. Residues 766-775 (GPREPPSEWT) show a composition bias toward basic and acidic residues.

This sequence belongs to the protein-tyrosine phosphatase family. Non-receptor class 4 subfamily. Interacts with PSTPIP1 and TGFB1I1. Interacts with PTK2B/PYK2. Interacts with LPXN. Interacts with SORBS2; this interaction greatly enhances WASF1 dephosphorylation and might mediate partial translocation to focal adhesion sites. Post-translationally, phosphorylated by STK24/MST3 and this results in inhibition of its activity.

It is found in the cytoplasm. Its subcellular location is the cell junction. The protein localises to the focal adhesion. It localises to the cell projection. The protein resides in the podosome. The enzyme catalyses O-phospho-L-tyrosyl-[protein] + H2O = L-tyrosyl-[protein] + phosphate. In terms of biological role, dephosphorylates a range of proteins, and thereby regulates cellular signaling cascades. Dephosphorylates cellular tyrosine kinases, such as ERBB2 and PTK2B/PYK2, and thereby regulates signaling via ERBB2 and PTK2B/PYK2. Selectively dephosphorylates ERBB2 phosphorylated at 'Tyr-1112', 'Tyr-1196', and/or 'Tyr-1248'. The sequence is that of Tyrosine-protein phosphatase non-receptor type 12 (Ptpn12) from Mus musculus (Mouse).